Here is a 176-residue protein sequence, read N- to C-terminus: MTTSPDPYAALPKLPSFSLTSTSITDGQPLATPQVSGIMGAGGADASPQLRWSGFPSETRSFAVTVYDPDAPTLSGFWHWAVANLPANVTELPEGVGDGRELPGGALTLVNDAGMRRYVGAAPPPGHGVHRYYVAVHAVKVEKLDLPEDASPAYLGFNLFQHAIARAVIFGTYEQR.

An N-acetylthreonine modification is found at threonine 2.

This sequence belongs to the UPF0098 family.

The polypeptide is UPF0098 protein Rv2140c (Mycobacterium tuberculosis (strain ATCC 25618 / H37Rv)).